The sequence spans 331 residues: Adenosine deaminase (331 aa).

H12 and H14 together coordinate Zn(2+). Substrate is bound by residues H14, D16, and G170. H197 contacts Zn(2+). E200 (proton donor) is an active-site residue. D278 provides a ligand contact to Zn(2+). A substrate-binding site is contributed by D279.

Belongs to the metallo-dependent hydrolases superfamily. Adenosine and AMP deaminases family. Adenosine deaminase subfamily. The cofactor is Zn(2+).

The catalysed reaction is adenosine + H2O + H(+) = inosine + NH4(+). It catalyses the reaction 2'-deoxyadenosine + H2O + H(+) = 2'-deoxyinosine + NH4(+). Catalyzes the hydrolytic deamination of adenosine and 2-deoxyadenosine. This is Adenosine deaminase from Shewanella sp. (strain W3-18-1).